A 187-amino-acid polypeptide reads, in one-letter code: Ribosome-recycling factor (187 aa).

The protein belongs to the RRF family.

It localises to the cytoplasm. In terms of biological role, responsible for the release of ribosomes from messenger RNA at the termination of protein biosynthesis. May increase the efficiency of translation by recycling ribosomes from one round of translation to another. The sequence is that of Ribosome-recycling factor from Bradyrhizobium sp. (strain BTAi1 / ATCC BAA-1182).